A 439-amino-acid polypeptide reads, in one-letter code: FK506-binding protein 59 (439 aa).

2 PPIase FKBP-type domains span residues 32-120 and 149-235; these read GCTV…LGWK and GAFV…VDCG. TPR repeat units lie at residues 252-285, 297-330, and 331-364; these read AKVY…LPTT, VATH…DKNN, and VKAL…EPGN.

Interacts with inaD and trpl, and may be part of the inaD signaling complex. As to expression, expression in the embryo is limited to three tissues: lymph glands, Garland cells and oenocyte cells.

It carries out the reaction [protein]-peptidylproline (omega=180) = [protein]-peptidylproline (omega=0). Its function is as follows. May have a role in phototransduction; inhibits or prevents Ca(2+) induced stimulation of the trpl ion channel. This Drosophila melanogaster (Fruit fly) protein is FK506-binding protein 59.